Reading from the N-terminus, the 97-residue chain is UPF0213 protein YE0453 (97 aa).

A GIY-YIG domain is found at 4 to 79; the sequence is SLWHLYLLRT…KQLSKQQKEK (76 aa).

This sequence belongs to the UPF0213 family.

The sequence is that of UPF0213 protein YE0453 from Yersinia enterocolitica serotype O:8 / biotype 1B (strain NCTC 13174 / 8081).